Here is a 313-residue protein sequence, read N- to C-terminus: Ribosomal RNA small subunit methyltransferase H (313 aa).

S-adenosyl-L-methionine-binding positions include G35–H37, D55, F79, D100, and Q107.

The protein belongs to the methyltransferase superfamily. RsmH family.

Its subcellular location is the cytoplasm. It catalyses the reaction cytidine(1402) in 16S rRNA + S-adenosyl-L-methionine = N(4)-methylcytidine(1402) in 16S rRNA + S-adenosyl-L-homocysteine + H(+). Specifically methylates the N4 position of cytidine in position 1402 (C1402) of 16S rRNA. The polypeptide is Ribosomal RNA small subunit methyltransferase H (Burkholderia orbicola (strain AU 1054)).